A 200-amino-acid polypeptide reads, in one-letter code: NADH-quinone oxidoreductase subunit B 2 (200 aa).

[4Fe-4S] cluster contacts are provided by Cys79, Cys80, Cys144, and Cys174.

It belongs to the complex I 20 kDa subunit family. As to quaternary structure, NDH-1 is composed of 14 different subunits. Subunits NuoB, C, D, E, F, and G constitute the peripheral sector of the complex. It depends on [4Fe-4S] cluster as a cofactor.

Its subcellular location is the cell inner membrane. The enzyme catalyses a quinone + NADH + 5 H(+)(in) = a quinol + NAD(+) + 4 H(+)(out). Its function is as follows. NDH-1 shuttles electrons from NADH, via FMN and iron-sulfur (Fe-S) centers, to quinones in the respiratory chain. The immediate electron acceptor for the enzyme in this species is believed to be ubiquinone. Couples the redox reaction to proton translocation (for every two electrons transferred, four hydrogen ions are translocated across the cytoplasmic membrane), and thus conserves the redox energy in a proton gradient. The polypeptide is NADH-quinone oxidoreductase subunit B 2 (Rhodopseudomonas palustris (strain BisA53)).